The chain runs to 908 residues: Translation initiation factor IF-2 (908 aa).

2 disordered regions span residues 123–154 and 212–278; these read EEPPILQPELPTEEKEELEVIESPQAPQEELK and KKEP…VSEK. The 171-residue stretch at 407-577 folds into the tr-type G domain; the sequence is ERAPIVTIMG…LFEAELLELK (171 aa). The G1 stretch occupies residues 416-423; that stretch reads GHVDHGKT. Position 416 to 423 (416 to 423) interacts with GTP; that stretch reads GHVDHGKT. Residues 441–445 are G2; it reads GITQH. The interval 463 to 466 is G3; the sequence is DTPG. GTP-binding positions include 463-467 and 517-520; these read DTPGH and NKMD. Residues 517 to 520 are G4; it reads NKMD. The G5 stretch occupies residues 553 to 555; it reads SAI.

It belongs to the TRAFAC class translation factor GTPase superfamily. Classic translation factor GTPase family. IF-2 subfamily.

The protein localises to the cytoplasm. Functionally, one of the essential components for the initiation of protein synthesis. Protects formylmethionyl-tRNA from spontaneous hydrolysis and promotes its binding to the 30S ribosomal subunits. Also involved in the hydrolysis of GTP during the formation of the 70S ribosomal complex. The sequence is that of Translation initiation factor IF-2 from Amoebophilus asiaticus (strain 5a2).